A 103-amino-acid chain; its full sequence is ATP synthase F(0) complex subunit g, mitochondrial (103 aa).

Position 2 is an N-acetylalanine (Ala2). 4 positions are modified to N6-acetyllysine: Lys11, Lys24, Lys35, and Lys54.

It belongs to the ATPase g subunit family. As to quaternary structure, component of the ATP synthase complex composed at least of ATP5F1A/subunit alpha, ATP5F1B/subunit beta, ATP5MC1/subunit c (homooctomer), MT-ATP6/subunit a, MT-ATP8/subunit 8, ATP5ME/subunit e, ATP5MF/subunit f, ATP5MG/subunit g, ATP5MK/subunit k, ATP5MJ/subunit j, ATP5F1C/subunit gamma, ATP5F1D/subunit delta, ATP5F1E/subunit epsilon, ATP5PF/subunit F6, ATP5PB/subunit b, ATP5PD/subunit d, ATP5PO/subunit OSCP. ATP synthase complex consists of a soluble F(1) head domain (subunits alpha(3) and beta(3)) - the catalytic core - and a membrane F(0) domain - the membrane proton channel (subunits c, a, 8, e, f, g, k and j). These two domains are linked by a central stalk (subunits gamma, delta, and epsilon) rotating inside the F1 region and a stationary peripheral stalk (subunits F6, b, d, and OSCP).

The protein resides in the mitochondrion. The protein localises to the mitochondrion inner membrane. Functionally, subunit g, of the mitochondrial membrane ATP synthase complex (F(1)F(0) ATP synthase or Complex V) that produces ATP from ADP in the presence of a proton gradient across the membrane which is generated by electron transport complexes of the respiratory chain. ATP synthase complex consist of a soluble F(1) head domain - the catalytic core - and a membrane F(1) domain - the membrane proton channel. These two domains are linked by a central stalk rotating inside the F(1) region and a stationary peripheral stalk. During catalysis, ATP synthesis in the catalytic domain of F(1) is coupled via a rotary mechanism of the central stalk subunits to proton translocation. In vivo, can only synthesize ATP although its ATP hydrolase activity can be activated artificially in vitro. Part of the complex F(0) domain. The sequence is that of ATP synthase F(0) complex subunit g, mitochondrial from Pongo abelii (Sumatran orangutan).